A 456-amino-acid polypeptide reads, in one-letter code: Methylenetetrahydrofolate--tRNA-(uracil-5-)-methyltransferase TrmFO (456 aa).

12 to 17 contacts FAD; sequence GGGLAG.

It belongs to the MnmG family. TrmFO subfamily. FAD serves as cofactor.

The protein localises to the cytoplasm. It catalyses the reaction uridine(54) in tRNA + (6R)-5,10-methylene-5,6,7,8-tetrahydrofolate + NADH + H(+) = 5-methyluridine(54) in tRNA + (6S)-5,6,7,8-tetrahydrofolate + NAD(+). The catalysed reaction is uridine(54) in tRNA + (6R)-5,10-methylene-5,6,7,8-tetrahydrofolate + NADPH + H(+) = 5-methyluridine(54) in tRNA + (6S)-5,6,7,8-tetrahydrofolate + NADP(+). In terms of biological role, catalyzes the folate-dependent formation of 5-methyl-uridine at position 54 (M-5-U54) in all tRNAs. This chain is Methylenetetrahydrofolate--tRNA-(uracil-5-)-methyltransferase TrmFO, found in Picosynechococcus sp. (strain ATCC 27264 / PCC 7002 / PR-6) (Agmenellum quadruplicatum).